Reading from the N-terminus, the 274-residue chain is Dermonecrotic toxin SdSicTox-betaIIB2ii (274 aa).

Histidine 5 is an active-site residue. Glutamate 25 and aspartate 27 together coordinate Mg(2+). Histidine 41 (nucleophile) is an active-site residue. 2 cysteine pairs are disulfide-bonded: cysteine 45-cysteine 51 and cysteine 47-cysteine 190. Aspartate 85 provides a ligand contact to Mg(2+).

The protein belongs to the arthropod phospholipase D family. Class II subfamily. Mg(2+) serves as cofactor. As to expression, expressed by the venom gland.

The protein resides in the secreted. The catalysed reaction is an N-(acyl)-sphingosylphosphocholine = an N-(acyl)-sphingosyl-1,3-cyclic phosphate + choline. The enzyme catalyses an N-(acyl)-sphingosylphosphoethanolamine = an N-(acyl)-sphingosyl-1,3-cyclic phosphate + ethanolamine. It catalyses the reaction a 1-acyl-sn-glycero-3-phosphocholine = a 1-acyl-sn-glycero-2,3-cyclic phosphate + choline. It carries out the reaction a 1-acyl-sn-glycero-3-phosphoethanolamine = a 1-acyl-sn-glycero-2,3-cyclic phosphate + ethanolamine. Functionally, dermonecrotic toxins cleave the phosphodiester linkage between the phosphate and headgroup of certain phospholipids (sphingolipid and lysolipid substrates), forming an alcohol (often choline) and a cyclic phosphate. This toxin acts on sphingomyelin (SM). It may also act on ceramide phosphoethanolamine (CPE), lysophosphatidylcholine (LPC) and lysophosphatidylethanolamine (LPE), but not on lysophosphatidylserine (LPS), and lysophosphatidylglycerol (LPG). It acts by transphosphatidylation, releasing exclusively cyclic phosphate products as second products. Induces dermonecrosis, hemolysis, increased vascular permeability, edema, inflammatory response, and platelet aggregation. In Sicarius cf. damarensis (strain GJB-2008) (Six-eyed sand spider), this protein is Dermonecrotic toxin SdSicTox-betaIIB2ii.